The following is a 277-amino-acid chain: Large ribosomal subunit protein uL2c (277 aa).

The tract at residues Val223–Ser277 is disordered.

Belongs to the universal ribosomal protein uL2 family. As to quaternary structure, part of the 50S ribosomal subunit.

The protein resides in the plastid. It localises to the chloroplast. The protein is Large ribosomal subunit protein uL2c (rpl2) of Marchantia polymorpha (Common liverwort).